The sequence spans 179 residues: ATP synthase subunit delta (179 aa).

The protein belongs to the ATPase delta chain family. F-type ATPases have 2 components, F(1) - the catalytic core - and F(0) - the membrane proton channel. F(1) has five subunits: alpha(3), beta(3), gamma(1), delta(1), epsilon(1). F(0) has three main subunits: a(1), b(2) and c(10-14). The alpha and beta chains form an alternating ring which encloses part of the gamma chain. F(1) is attached to F(0) by a central stalk formed by the gamma and epsilon chains, while a peripheral stalk is formed by the delta and b chains.

Its subcellular location is the cell membrane. Functionally, f(1)F(0) ATP synthase produces ATP from ADP in the presence of a proton or sodium gradient. F-type ATPases consist of two structural domains, F(1) containing the extramembraneous catalytic core and F(0) containing the membrane proton channel, linked together by a central stalk and a peripheral stalk. During catalysis, ATP synthesis in the catalytic domain of F(1) is coupled via a rotary mechanism of the central stalk subunits to proton translocation. In terms of biological role, this protein is part of the stalk that links CF(0) to CF(1). It either transmits conformational changes from CF(0) to CF(1) or is implicated in proton conduction. The sequence is that of ATP synthase subunit delta from Listeria innocua serovar 6a (strain ATCC BAA-680 / CLIP 11262).